A 207-amino-acid polypeptide reads, in one-letter code: Uracil phosphoribosyltransferase (207 aa).

Residues R77, R102, and D129 to S137 contribute to the 5-phospho-alpha-D-ribose 1-diphosphate site. Uracil contacts are provided by residues I192 and G197 to A199. D198 provides a ligand contact to 5-phospho-alpha-D-ribose 1-diphosphate.

This sequence belongs to the UPRTase family. Mg(2+) serves as cofactor.

The catalysed reaction is UMP + diphosphate = 5-phospho-alpha-D-ribose 1-diphosphate + uracil. The protein operates within pyrimidine metabolism; UMP biosynthesis via salvage pathway; UMP from uracil: step 1/1. Allosterically activated by GTP. Functionally, catalyzes the conversion of uracil and 5-phospho-alpha-D-ribose 1-diphosphate (PRPP) to UMP and diphosphate. The polypeptide is Uracil phosphoribosyltransferase (Dictyoglomus thermophilum (strain ATCC 35947 / DSM 3960 / H-6-12)).